We begin with the raw amino-acid sequence, 251 residues long: MNGMSTGTLVLLRHGESEWNALNLFTGWVDVHLTDKGIAEGKRAGELLLEHNLLPDVLYTSLLRRAISTANIALDTADRHWIPVIRDWRLNERHYGALQGRNKAQVKDKYGDEQFMLWRRSYDTPPPTIEPGSEYSQDTDPRYANLDEVPLTECLKDVVVRLIPYWEDTISADLLAGKTVLITAHGNSLRALVKHLDGISDEDIAGLNIPTGIPLRYDLDENLKPLNPGGTYLDPEAAAAGAAAVANQGGK.

Substrate is bound by residues 13–20, 26–27, Arg-65, 92–95, Lys-103, 119–120, and 186–187; these read RHGESEWN, TG, ERHY, RR, and GN. The active-site Tele-phosphohistidine intermediate is the His-14. Residue Glu-92 is the Proton donor/acceptor of the active site.

This sequence belongs to the phosphoglycerate mutase family. BPG-dependent PGAM subfamily.

The catalysed reaction is (2R)-2-phosphoglycerate = (2R)-3-phosphoglycerate. It functions in the pathway carbohydrate degradation; glycolysis; pyruvate from D-glyceraldehyde 3-phosphate: step 3/5. In terms of biological role, catalyzes the interconversion of 2-phosphoglycerate and 3-phosphoglycerate. The chain is 2,3-bisphosphoglycerate-dependent phosphoglycerate mutase from Rhodococcus opacus (strain B4).